The primary structure comprises 103 residues: Small ribosomal subunit protein uS10 (103 aa).

The protein belongs to the universal ribosomal protein uS10 family. Part of the 30S ribosomal subunit.

Its function is as follows. Involved in the binding of tRNA to the ribosomes. The chain is Small ribosomal subunit protein uS10 from Verminephrobacter eiseniae (strain EF01-2).